Here is a 660-residue protein sequence, read N- to C-terminus: Protein FAM161A (660 aa).

Coiled coils occupy residues 93–120 (EEYF…YQDK) and 296–320 (YHDL…ALLA). Positions 341–525 (QLRDFLKYKK…PTVSSRGREQ (185 aa)) are required for interaction with CFAP418. Residues Lys468 and Lys484 each participate in a glycyl lysine isopeptide (Lys-Gly) (interchain with G-Cter in SUMO2) cross-link. Positions 522–552 (GREQAVRKSEKERMREYQRELEEREEKLKKR) form a coiled coil. Residues 605 to 660 (KSVTEDKESFNEEEKIEERENGEENYFIDTNSQDSYKEKDEANEESEEEKSVEESH) are disordered. The segment covering 606–623 (SVTEDKESFNEEEKIEER) has biased composition (basic and acidic residues). Over residues 645–660 (EANEESEEEKSVEESH) the composition is skewed to acidic residues.

This sequence belongs to the FAM161 family. Interacts (via central region) with CFAP418 (via N-terminus); the interaction is direct. Interacts (via C-terminus) with microtubules. Interacts with LCA5. Interacts with CEP290. Interacts with SDCCAG8. Interacts with FAM161B. Interacts with POC1B. Interacts with CEP78. Forms a microtubule-associated complex with POC5, CETN2 and POC1B. Interacts with CCDC15. Isoform 1 and isoform 3 are widely expressed with highest levels in retina and testis, with isoform 1 being the most abundant in all tissues tested.

It is found in the cytoplasm. It localises to the cytoskeleton. Its subcellular location is the cilium basal body. The protein localises to the cell projection. The protein resides in the cilium. It is found in the microtubule organizing center. It localises to the centrosome. Its subcellular location is the centriole. In terms of biological role, involved in ciliogenesis. This Homo sapiens (Human) protein is Protein FAM161A (FAM161A).